A 414-amino-acid polypeptide reads, in one-letter code: Isocitrate dehydrogenase [NADP] cytoplasmic (414 aa).

Residue S2 is modified to N-acetylserine. Y42 bears the Phosphotyrosine mark. 75–77 contacts NADP(+); it reads TIT. T77 is a binding site for substrate. K81 is subject to N6-acetyllysine. Residue R82 coordinates NADP(+). Substrate contacts are provided by residues 94–100 and R109; that span reads SPNGTIR. Residue K126 is modified to N6-succinyllysine. Positions 132 and 212 each coordinate substrate. N6-acetyllysine occurs at positions 224, 233, and 243. Residue D252 coordinates Mn(2+). K260 lines the NADP(+) pocket. Mn(2+) contacts are provided by D275 and D279. 310–315 serves as a coordination point for NADP(+); that stretch reads GTVTRH. An N6-acetyllysine modification is found at K321. An NADP(+)-binding site is contributed by N328. S389 is modified (phosphoserine). K400 carries the post-translational modification N6-succinyllysine.

The protein belongs to the isocitrate and isopropylmalate dehydrogenases family. Homodimer. Mg(2+) is required as a cofactor. The cofactor is Mn(2+). Acetylation at Lys-374 dramatically reduces catalytic activity.

It is found in the cytoplasm. It localises to the cytosol. It catalyses the reaction D-threo-isocitrate + NADP(+) = 2-oxoglutarate + CO2 + NADPH. Functionally, catalyzes the NADP(+)-dependent oxidative decarboxylation of isocitrate (D-threo-isocitrate) to 2-ketoglutarate (2-oxoglutarate), which is required by other enzymes such as the phytanoyl-CoA dioxygenase. Plays a critical role in the generation of NADPH, an important cofactor in many biosynthesis pathways. May act as a corneal epithelial crystallin and may be involved in maintaining corneal epithelial transparency. The sequence is that of Isocitrate dehydrogenase [NADP] cytoplasmic (IDH1) from Microtus ochrogaster (Prairie vole).